Here is a 377-residue protein sequence, read N- to C-terminus: All-trans-retinol dehydrogenase [NAD(+)] ADH4 (377 aa).

Zn(2+) is bound at residue Cys-47. Pro-48–Thr-49 is an NAD(+) binding site. Residues His-68, Cys-98, Cys-101, Cys-104, Cys-112, and Cys-179 each coordinate Zn(2+). NAD(+) contacts are provided by residues Gly-204–Gly-209, Asp-228, Lys-233, Val-297–Ala-299, Thr-320–Phe-322, and Arg-372.

The protein belongs to the zinc-containing alcohol dehydrogenase family. Class-II subfamily. Dimer. Zn(2+) is required as a cofactor. As to expression, liver specific.

It localises to the cytoplasm. The catalysed reaction is all-trans-retinol + NAD(+) = all-trans-retinal + NADH + H(+). It catalyses the reaction 9-cis-retinol + NAD(+) = 9-cis-retinal + NADH + H(+). The enzyme catalyses 20-oxo-(5Z,8Z,11Z,14Z)-eicosatetraenoate + NAD(+) + H2O = (5Z,8Z,11Z,14Z)-eicosatetraenedioate + NADH + 2 H(+). It carries out the reaction 20-hydroxy-(5Z,8Z,11Z,14Z)-eicosatetraenoate + NAD(+) = 20-oxo-(5Z,8Z,11Z,14Z)-eicosatetraenoate + NADH + H(+). The catalysed reaction is 1,4-benzoquinone + NADH + H(+) = hydroquinone + NAD(+). With respect to regulation, oxidation of 20-HETE is inhibited by low concentrations of N-heptylformamide. Oxidation of 20-HETE is a decreased by 55-65% by either all-trans-retinol or all-trans-retinoic acid. Strongly inhibited by omega-hydroxy fatty acids. In terms of biological role, catalyzes the NAD-dependent oxidation of either all-trans-retinol or 9-cis-retinol. Also oxidizes long chain omega-hydroxy fatty acids, such as 20-HETE, producing both the intermediate aldehyde, 20-oxoarachidonate and the end product, a dicarboxylic acid, (5Z,8Z,11Z,14Z)-eicosatetraenedioate. Also catalyzes the reduction of benzoquinones. This Rattus norvegicus (Rat) protein is All-trans-retinol dehydrogenase [NAD(+)] ADH4.